Reading from the N-terminus, the 498-residue chain is ATP synthase subunit beta, chloroplastic (498 aa).

172 to 179 (GGAGVGKT) serves as a coordination point for ATP.

It belongs to the ATPase alpha/beta chains family. F-type ATPases have 2 components, CF(1) - the catalytic core - and CF(0) - the membrane proton channel. CF(1) has five subunits: alpha(3), beta(3), gamma(1), delta(1), epsilon(1). CF(0) has four main subunits: a(1), b(1), b'(1) and c(9-12).

The protein localises to the plastid. Its subcellular location is the chloroplast thylakoid membrane. It catalyses the reaction ATP + H2O + 4 H(+)(in) = ADP + phosphate + 5 H(+)(out). Functionally, produces ATP from ADP in the presence of a proton gradient across the membrane. The catalytic sites are hosted primarily by the beta subunits. This Daucus carota (Wild carrot) protein is ATP synthase subunit beta, chloroplastic.